Reading from the N-terminus, the 451-residue chain is Eukaryotic translation initiation factor 5 (451 aa).

29 to 36 (GRGNGIKT) is a GTP binding site. 2 disordered regions span residues 143–233 (LKNP…DDDV) and 263–299 (STEETEKKMKQPTHKDGSTNGSAKEIPNDKPAVTKPS). Positions 147 to 178 (PEQKKGGKDKKAMRRAEKERLKEGEAADEEQK) are enriched in basic and acidic residues. Positions 179–188 (KLKKDAKKKG) are enriched in basic residues. Basic and acidic residues-rich tracts occupy residues 208–226 (DEDHSSSPTRSHDGDKAAA) and 266–279 (ETEKKMKQPTHKDG). Residues 290–449 (NDKPAVTKPS…QSAESDEEGD (160 aa)) form the W2 domain.

This sequence belongs to the eIF-2-beta/eIF-5 family.

Its function is as follows. Catalyzes the hydrolysis of GTP bound to the 40S ribosomal initiation complex (40S.mRNA.Met-tRNA[F].eIF-2.GTP) with the subsequent joining of a 60S ribosomal subunit resulting in the release of eIF-2 and the guanine nucleotide. The subsequent joining of a 60S ribosomal subunit results in the formation of a functional 80S initiation complex (80S.mRNA.Met-tRNA[F]). This chain is Eukaryotic translation initiation factor 5 (EIF5), found in Zea mays (Maize).